Consider the following 466-residue polypeptide: Glutamate--tRNA ligase (466 aa).

A 'HIGH' region motif is present at residues proline 9–serine 19. The 'KMSKS' region signature appears at lysine 237 to arginine 241. Residue lysine 240 participates in ATP binding.

This sequence belongs to the class-I aminoacyl-tRNA synthetase family. Glutamate--tRNA ligase type 1 subfamily. In terms of assembly, monomer.

The protein localises to the cytoplasm. The enzyme catalyses tRNA(Glu) + L-glutamate + ATP = L-glutamyl-tRNA(Glu) + AMP + diphosphate. In terms of biological role, catalyzes the attachment of glutamate to tRNA(Glu) in a two-step reaction: glutamate is first activated by ATP to form Glu-AMP and then transferred to the acceptor end of tRNA(Glu). This chain is Glutamate--tRNA ligase, found in Baumannia cicadellinicola subsp. Homalodisca coagulata.